The primary structure comprises 88 residues: MAHKKGTGSTRNGRDSNSKRLGVKAYGGETVTAGSILIRQRGTSVLPGVNVGQGKDDTLFALTDGVVAFESIRRSLRNRKRISVVASS.

A disordered region spans residues 1 to 24 (MAHKKGTGSTRNGRDSNSKRLGVK).

It belongs to the bacterial ribosomal protein bL27 family.

In Prochlorococcus marinus (strain MIT 9313), this protein is Large ribosomal subunit protein bL27.